The chain runs to 498 residues: Putative antiporter subunit mnhD2 (498 aa).

14 consecutive transmembrane segments (helical) span residues 2 to 22 (LSNL…ILVF), 32 to 52 (YLYL…LIYV), 78 to 98 (LSLI…AYGF), 108 to 128 (YHLP…FLTS), 130 to 150 (LFNL…LITL), 161 to 181 (IIYV…IGLL), 209 to 229 (ISLI…FMWL), 240 to 260 (LAAL…IRFF), 271 to 291 (IHPL…IGVI), 308 to 328 (IGFI…GAIF), 330 to 350 (LVND…LVYI), 369 to 389 (FGVA…FSGF), 403 to 423 (GNYI…YSLF), and 451 to 471 (ILSI…VVLN).

This sequence belongs to the CPA3 antiporters (TC 2.A.63) subunit D family. In terms of assembly, may form a heterooligomeric complex that consists of seven subunits: mnhA2, mnhB2, mnhC2, mnhD2, mnhE2, mnhF2 and mnhG2.

The protein resides in the cell membrane. The chain is Putative antiporter subunit mnhD2 (mnhD2) from Staphylococcus aureus (strain JH1).